The chain runs to 530 residues: Chaperonin GroEL, chloroplastic (530 aa).

Residues 29 to 32, 86 to 90, Gly414, 480 to 482, and Asp496 contribute to the ATP site; these read TLGP, DGTTT, and DAL.

This sequence belongs to the chaperonin (HSP60) family. In terms of assembly, forms a cylinder of 14 subunits composed of two heptameric rings stacked back-to-back. Interacts with the co-chaperonin GroES.

The protein localises to the plastid. The protein resides in the chloroplast. It catalyses the reaction ATP + H2O + a folded polypeptide = ADP + phosphate + an unfolded polypeptide.. Together with its co-chaperonin GroES, plays an essential role in assisting protein folding. The GroEL-GroES system forms a nano-cage that allows encapsulation of the non-native substrate proteins and provides a physical environment optimized to promote and accelerate protein folding. This is Chaperonin GroEL, chloroplastic from Cyanidium caldarium (Red alga).